The following is a 211-amino-acid chain: tRNA (guanine-N(7)-)-methyltransferase (211 aa).

Glu44, Asp69, Asp96, and Asp118 together coordinate S-adenosyl-L-methionine. Residue Asp118 is part of the active site. Lys122 provides a ligand contact to substrate. The interaction with RNA stretch occupies residues 124 to 129 (KHEKRR). Substrate contacts are provided by residues Asp154 and 191–194 (TEYE).

It belongs to the class I-like SAM-binding methyltransferase superfamily. TrmB family.

The catalysed reaction is guanosine(46) in tRNA + S-adenosyl-L-methionine = N(7)-methylguanosine(46) in tRNA + S-adenosyl-L-homocysteine. The protein operates within tRNA modification; N(7)-methylguanine-tRNA biosynthesis. Functionally, catalyzes the formation of N(7)-methylguanine at position 46 (m7G46) in tRNA. In Streptococcus pyogenes serotype M6 (strain ATCC BAA-946 / MGAS10394), this protein is tRNA (guanine-N(7)-)-methyltransferase.